Reading from the N-terminus, the 600-residue chain is Aspartate--tRNA(Asp/Asn) ligase (600 aa).

Glutamate 176 is a binding site for L-aspartate. Residues 200–203 (QQFK) form an aspartate region. 2 residues coordinate L-aspartate: arginine 222 and histidine 452. Residue 222–224 (RDE) coordinates ATP. Residue glutamate 490 coordinates ATP. Arginine 497 lines the L-aspartate pocket. 542-545 (GIDR) serves as a coordination point for ATP.

Belongs to the class-II aminoacyl-tRNA synthetase family. Type 1 subfamily. Homodimer.

It localises to the cytoplasm. The catalysed reaction is tRNA(Asx) + L-aspartate + ATP = L-aspartyl-tRNA(Asx) + AMP + diphosphate. Aspartyl-tRNA synthetase with relaxed tRNA specificity since it is able to aspartylate not only its cognate tRNA(Asp) but also tRNA(Asn). Reaction proceeds in two steps: L-aspartate is first activated by ATP to form Asp-AMP and then transferred to the acceptor end of tRNA(Asp/Asn). The polypeptide is Aspartate--tRNA(Asp/Asn) ligase (Rickettsia felis (strain ATCC VR-1525 / URRWXCal2) (Rickettsia azadi)).